A 396-amino-acid chain; its full sequence is NADH-quinone oxidoreductase subunit D (396 aa).

It belongs to the complex I 49 kDa subunit family. As to quaternary structure, NDH-1 is composed of 14 different subunits. Subunits NuoB, C, D, E, F, and G constitute the peripheral sector of the complex.

It is found in the cell inner membrane. It catalyses the reaction a quinone + NADH + 5 H(+)(in) = a quinol + NAD(+) + 4 H(+)(out). NDH-1 shuttles electrons from NADH, via FMN and iron-sulfur (Fe-S) centers, to quinones in the respiratory chain. The immediate electron acceptor for the enzyme in this species is believed to be ubiquinone. Couples the redox reaction to proton translocation (for every two electrons transferred, four hydrogen ions are translocated across the cytoplasmic membrane), and thus conserves the redox energy in a proton gradient. The chain is NADH-quinone oxidoreductase subunit D from Brucella suis biovar 1 (strain 1330).